A 362-amino-acid polypeptide reads, in one-letter code: MLVMAPRTVLLLLSAALALTETWAGSHSMRYFYTSVSRPGRGEPRFISVGYVDDTQFVRFDSDAASPREEPRAPWIEQEGPEYWDRNTQIYKAQAQTDRESLRNLRGYYNQSEAGSHTLQSMYGCDVGPDGRLLRGHDQYAYDGKDYIALNEDLRSWTAADTAAQITQRKWEAAREAEQRRAYLEGECVEWLRRYLENGKDKLERADPPKTHVTHHPISDHEATLRCWALGFYPAEITLTWQRDGEDQTQDTELVETRPAGDRTFQKWAAVVVPSGEEQRYTCHVQHEGLPKPLTLRWEPSSQSTVPIVGIVAGLAVLAVVVIGAVVAAVMCRRKSSGGKGGSYSQAACSDSAQGSDVSLTA.

Positions 1 to 24 (MLVMAPRTVLLLLSAALALTETWA) are cleaved as a signal peptide. Positions 3–11 (VMAPRTVLL) are VL9 epitope. The interval 25 to 114 (GSHSMRYFYT…LRGYYNQSEA (90 aa)) is alpha-1. At 25–309 (GSHSMRYFYT…PSSQSTVPIV (285 aa)) the chain is on the extracellular side. Asn-87 is a binding site for a peptide antigen. The short motif at 101-107 (SLRNLRG) is the Bw6 motif element. Tyr-108 is an a peptide antigen binding site. Residue Asn-110 is glycosylated (N-linked (GlcNAc...) asparagine). An alpha-2 region spans residues 115–206 (GSHTLQSMYG…ENGKDKLERA (92 aa)). Cys-125 and Cys-188 form a disulfide bridge. A peptide antigen is bound by residues Thr-167, Lys-170, Glu-176, Tyr-183, and Tyr-195. The interval 207-298 (DPPKTHVTHH…GLPKPLTLRW (92 aa)) is alpha-3. The region spanning 209–295 (PKTHVTHHPI…QHEGLPKPLT (87 aa)) is the Ig-like C1-type domain. An intrachain disulfide couples Cys-227 to Cys-283. The segment at 299 to 309 (EPSSQSTVPIV) is connecting peptide. Residues 310–333 (GIVAGLAVLAVVVIGAVVAAVMCR) traverse the membrane as a helical segment. Residues 334-362 (RKSSGGKGGSYSQAACSDSAQGSDVSLTA) are Cytoplasmic-facing. Residues 337-362 (SGGKGGSYSQAACSDSAQGSDVSLTA) are disordered. The segment covering 346-362 (QAACSDSAQGSDVSLTA) has biased composition (polar residues).

As to quaternary structure, heterotrimer that consists of an alpha chain HLA-B, a beta chain B2M and a peptide (peptide-HLA-B-B2M). Early in biogenesis, HLA-B-B2M dimer interacts with the components of the peptide-loading complex composed of TAPBP, TAP1-TAP2, TAPBPL, PDIA3/ERP57 and CALR. Interacts with TAP1-TAP2 transporter via TAPBP; this interaction is obligatory for the loading of peptide epitopes delivered to the ER by TAP1-TAP2 transporter. Interacts with TAPBPL; TAPBPL binds peptide-free HLA-B-B2M complexes or those loaded with low affinity peptides, likely facilitating peptide exchange for higher affinity peptides. Only optimally assembled peptide-HLA-B-B2M trimer translocates to the surface of antigen-presenting cells, where it interacts with TCR and CD8 coreceptor on the surface of T cells. HLA-B (via polymorphic alpha-1 and alpha-2 domains) interacts with antigen-specific TCR (via CDR1, CDR2 and CDR3 domains). One HLA-B molecule (mainly via nonpolymorphic alpha-3 domain) interacts with one CD8A homodimer (via CDR-like loop); this interaction ensures peptide-HLA-B-B2M recognition by CD8-positive T cells only. Allele B*57:01 interacts (via Bw4 motif) with KIR3DL1 (via Ig-like C2-type domain); this interaction may interfere with peptide binding. Allele B*46:01 interacts with KIR2DL3. In terms of assembly, (Microbial infection) Interacts with HTLV-1 accessory protein p12I.

It localises to the cell membrane. The protein resides in the endoplasmic reticulum membrane. Antigen-presenting major histocompatibility complex class I (MHCI) molecule. In complex with B2M/beta 2 microglobulin displays primarily viral and tumor-derived peptides on antigen-presenting cells for recognition by alpha-beta T cell receptor (TCR) on HLA-B-restricted CD8-positive T cells, guiding antigen-specific T cell immune response to eliminate infected or transformed cells. May also present self-peptides derived from the signal sequence of secreted or membrane proteins, although T cells specific for these peptides are usually inactivated to prevent autoreactivity. Both the peptide and the MHC molecule are recognized by TCR, the peptide is responsible for the fine specificity of antigen recognition and MHC residues account for the MHC restriction of T cells. Typically presents intracellular peptide antigens of 8 to 13 amino acids that arise from cytosolic proteolysis via constitutive proteasome and IFNG-induced immunoproteasome. Can bind different peptides containing allele-specific binding motifs, which are mainly defined by anchor residues at position 2 and 9. In terms of biological role, allele B*07:02: Displays peptides sharing a common signature motif, namely a Pro residue at position 2 and mainly a Leu anchor residue at the C-terminus. Presents a long peptide (APRGPHGGAASGL) derived from the cancer-testis antigen CTAG1A/NY-ESO-1, eliciting a polyclonal CD8-positive T cell response against tumor cells. Presents viral epitopes derived from HIV-1 gag-pol (TPQDLNTML) and Nef (RPQVPLRPM). Presents an immunodominant epitope derived from SARS-CoV-2 N/nucleoprotein (SPRWYFYYL). Displays self-peptides including a peptide derived from the signal sequence of HLA-DPB1 (APRTVALTA). Its function is as follows. Allele B*08:01: Presents to CD8-positive T cells viral epitopes derived from EBV/HHV-4 EBNA3 (QAKWRLQTL), eliciting cytotoxic T cell response. Functionally, allele B*13:02: Presents multiple HIV-1 epitopes derived from gag (RQANFLGKI, GQMREPRGSDI), nef (RQDILDLWI), gag-pol (RQYDQILIE, GQGQWTYQI) and rev (LQLPPLERL), all having in common a Gln residue at position 2 and mainly hydrophobic amino acids Leu, Ile or Val at the C-terminus. Associated with successful control of HIV-1 infection. Allele B*18:01: Preferentially presents octomeric and nonameric peptides sharing a common motif, namely a Glu at position 2 and Phe or Tyr anchor residues at the C-terminus. Presents an EBV/HHV-4 epitope derived from BZLF1 (SELEIKRY). May present to CD8-positive T cells an antigenic peptide derived from MAGEA3 (MEVDPIGHLY), triggering an anti-tumor immune response. May display a broad repertoire of self-peptides with a preference for peptides derived from RNA-binding proteins. In terms of biological role, allele B*27:05: Presents to CD8-positive T cells immunodominant viral epitopes derived from HCV POLG (ARMILMTHF), HIV-1 gag (KRWIILGLNK), IAV NP (SRYWAIRTR), SARS-CoV-2 N/nucleoprotein (QRNAPRITF), EBV/HHV-4 EBNA4 (HRCQAIRKK) and EBV/HHV-4 EBNA6 (RRIYDLIEL), conferring longterm protection against viral infection. Can present self-peptides derived from cytosolic and nuclear proteins. All peptides carry an Arg at position 2. The peptide-bound form interacts with NK cell inhibitory receptor KIR3DL1 and inhibits NK cell activation in a peptide-specific way, being particularly sensitive to the nature of the amino acid side chain at position 8 of the antigenic peptide. KIR3DL1 fails to recognize HLA-B*27:05 in complex with B2M and EBV/HHV-4 EBNA6 (RRIYDLIEL) peptide, which can lead to increased activation of NK cells during infection. May present an altered repertoire of peptides in the absence of TAP1-TAP2 and TAPBPL. Its function is as follows. Allele B*40:01: Presents immunodominant viral epitopes derived from EBV/HHV-4 LMP2 (IEDPPFNSL) and SARS-CoV-2 N/nucleoprotein (MEVTPSGTWL), triggering memory CD8-positive T cell response. Displays self-peptides sharing a signature motif, namely a Glu at position 2 and a Leu anchor residue at the C-terminus. Functionally, allele B*41:01: Displays self-peptides sharing a signature motif, namely a Glu at position 2 and Ala or Pro anchor residues at the C-terminus. Allele B*44:02: Presents immunodominant viral epitopes derived from EBV/HHV-4 EBNA4 (VEITPYKPTW) and EBNA6 (AEGGVGWRHW, EENLLDFVRF), triggering memory CD8-positive T cell response. Displays self-peptides sharing a signature motif, namely a Glu at position 2 and Phe, Tyr or Trp anchor residues at the C-terminus. In terms of biological role, allele B*45:01: Displays self-peptides sharing a signature motif, namely a Glu at position 2 and Ala or Pro anchor residues at the C-terminus. Its function is as follows. Allele B*46:01: Preferentially presents nonameric peptides sharing a signature motif, namely Ala and Leu at position 2 and Tyr, Phe, Leu, or Met anchor residues at the C-terminus. The peptide-bound form interacts with KIR2DL3 and inhibits NK cell cytotoxic response in a peptide-specific way. Functionally, allele B*47:01: Displays self-peptides sharing a signature motif, namely an Asp at position 2 and Leu or Met anchor residues at the C-terminus. Allele B*49:01: Displays self-peptides sharing a signature motif, namely a Glu at position 2 and Ile or Val anchor residues at the C-terminus. In terms of biological role, allele B*50:01: Displays self-peptides sharing a signature motif, namely a Glu at position 2 and Ala or Pro anchor residues at the C-terminus. Its function is as follows. Allele B*51:01: Presents an octomeric HIV-1 epitope derived from gag-pol (TAFTIPSI) to the public TRAV17/TRBV7-3 TCR clonotype, strongly suppressing HIV-1 replication. Functionally, allele B*54:01: Displays peptides sharing a common signature motif, namely a Pro residue at position 2 and Ala anchor residue at the C-terminus. Allele B*55:01: Displays peptides sharing a common signature motif, namely a Pro residue at position 2 and Ala anchor residue at the C-terminus. In terms of biological role, allele B*56:01: Displays peptides sharing a common signature motif, namely a Pro residue at position 2 and Ala anchor residue at the C-terminus. Its function is as follows. Allele B*57:01: The peptide-bound form recognizes KIR3DL1 and inhibits NK cell cytotoxic response. Presents HIV gag peptides (immunodominant KAFSPEVIPMF and subdominant KALGPAATL epitopes) predominantly to CD8-positive T cell clones expressing a TRAV41-containing TCR, triggering HLA-B-restricted T cell responses. Functionally, allele B*67:01: Displays peptides sharing a common signature motif, namely a Pro residue at position 2 and Leu anchor residue at the C-terminus. This chain is HLA class I histocompatibility antigen, B alpha chain, found in Homo sapiens (Human).